Here is a 91-residue protein sequence, read N- to C-terminus: DNA-directed RNA polymerase subunit omega (91 aa).

The protein belongs to the RNA polymerase subunit omega family. In terms of assembly, the RNAP catalytic core consists of 2 alpha, 1 beta, 1 beta' and 1 omega subunit. When a sigma factor is associated with the core the holoenzyme is formed, which can initiate transcription.

The enzyme catalyses RNA(n) + a ribonucleoside 5'-triphosphate = RNA(n+1) + diphosphate. Its function is as follows. Promotes RNA polymerase assembly. Latches the N- and C-terminal regions of the beta' subunit thereby facilitating its interaction with the beta and alpha subunits. In Aeromonas hydrophila subsp. hydrophila (strain ATCC 7966 / DSM 30187 / BCRC 13018 / CCUG 14551 / JCM 1027 / KCTC 2358 / NCIMB 9240 / NCTC 8049), this protein is DNA-directed RNA polymerase subunit omega.